Reading from the N-terminus, the 337-residue chain is Ycf66-like protein (337 aa).

A disordered region spans residues 111–337; that stretch reads TEAELDQLEP…GADDQERFDY (227 aa). The segment covering 113–123 has biased composition (acidic residues); it reads AELDQLEPEDE. 2 stretches are compositionally biased toward basic and acidic residues: residues 133–143 and 253–269; these read RGYDDDARSGR and FGDRPERNAPRNARPYE. Residues 304–316 show a composition bias toward polar residues; sequence QSRSGNPRSQRPS.

It belongs to the ycf66 family.

This is Ycf66-like protein from Synechocystis sp. (strain ATCC 27184 / PCC 6803 / Kazusa).